A 189-amino-acid chain; its full sequence is Large ribosomal subunit protein eL20 (189 aa).

This sequence belongs to the eukaryotic ribosomal protein eL20 family.

The protein localises to the cytoplasm. The protein is Large ribosomal subunit protein eL20 (RPL18A) of Tetrahymena thermophila.